The following is a 323-amino-acid chain: Mitochondrial glutamate carrier 1 (323 aa).

Solcar repeat units follow at residues 6 to 93 (ISLP…FRHQ), 101 to 214 (LTLL…LNQL), and 223 to 312 (SPFY…GIAE). 6 consecutive transmembrane segments (helical) span residues 12-32 (LINGGIAGLIGVTCVFPIDLA), 62-82 (YFGMYRGAAVNLTLVTPEKAI), 107-127 (MLAGCGAGTCQVIVTTPMEML), 189-209 (GLGATLLRDVPFSVVYFPLFA), 223-243 (SPFYVSFLAGCVAGSAAAVAV), and 292-312 (ALVIAPLFGIAQVVYFLGIAE).

The protein belongs to the mitochondrial carrier (TC 2.A.29) family. As to expression, expressed at high levels in brain, liver, and pancreas.

The protein localises to the mitochondrion inner membrane. The enzyme catalyses L-glutamate(in) + H(+)(in) = L-glutamate(out) + H(+)(out). In terms of biological role, mitochondrial glutamate/H(+) symporter. Responsible for the transport of glutamate from the cytosol into the mitochondrial matrix with the concomitant import of a proton. Plays a role in the control of glucose-stimulated insulin secretion. The protein is Mitochondrial glutamate carrier 1 of Homo sapiens (Human).